Consider the following 127-residue polypeptide: Small ribosomal subunit protein uS13 (127 aa).

A disordered region spans residues Arg90 to Lys127. Residues Gln101–Lys127 show a composition bias toward basic residues.

This sequence belongs to the universal ribosomal protein uS13 family. In terms of assembly, part of the 30S ribosomal subunit. Forms a loose heterodimer with protein S19. Forms two bridges to the 50S subunit in the 70S ribosome.

Located at the top of the head of the 30S subunit, it contacts several helices of the 16S rRNA. In the 70S ribosome it contacts the 23S rRNA (bridge B1a) and protein L5 of the 50S subunit (bridge B1b), connecting the 2 subunits; these bridges are implicated in subunit movement. Contacts the tRNAs in the A and P-sites. This is Small ribosomal subunit protein uS13 from Rippkaea orientalis (strain PCC 8801 / RF-1) (Cyanothece sp. (strain PCC 8801)).